Here is a 72-residue protein sequence, read N- to C-terminus: Alpha-elapitoxin-Dv2b (72 aa).

5 disulfide bridges follow: Cys-3-Cys-21, Cys-14-Cys-42, Cys-27-Cys-31, Cys-46-Cys-57, and Cys-58-Cys-63.

Belongs to the three-finger toxin family. Long-chain subfamily. Type II alpha-neurotoxin sub-subfamily. In terms of processing, neurotoxin 4.7.3 differs from 4.9.3 only in that Trp-26 has undergone partial photooxidation. In terms of tissue distribution, expressed by the venom gland.

Its subcellular location is the secreted. Binds with high affinity to muscular (alpha-1/CHRNA1) and neuronal (alpha-7/CHRNA7) nicotinic acetylcholine receptor (nAChR) and inhibits acetylcholine from binding to the receptor, thereby impairing neuromuscular and neuronal transmission. This Dendroaspis viridis (Western green mamba) protein is Alpha-elapitoxin-Dv2b.